A 390-amino-acid polypeptide reads, in one-letter code: Tuftelin (390 aa).

2 coiled-coil regions span residues Asp88–Arg126 and Asp162–Gln351. Ser171 is subject to Phosphoserine.

It belongs to the tuftelin family. In terms of assembly, interacts with TFIP11. In terms of tissue distribution, present in the extracellular enamel and is mainly associated with the crystal component.

The protein localises to the secreted. Its function is as follows. Involved in the structural organization of the epidermis. Involved in the mineralization and structural organization of enamel. The polypeptide is Tuftelin (TUFT1) (Bos taurus (Bovine)).